A 1020-amino-acid polypeptide reads, in one-letter code: Sodium/potassium-transporting ATPase subunit alpha-2 (1020 aa).

Positions 1–5 are excised as a propeptide; it reads MGRGA. The disordered stretch occupies residues 1–31; sequence MGRGAGREYSPAATTAENGGGKKKQKEKELD. Residues 6-85 are Cytoplasmic-facing; it reads GREYSPAATT…NALTPPPTTP (80 aa). Serine 10 is modified (phosphoserine). Residues 80–82 form an interaction with phosphoinositide-3 kinase region; sequence PPP. Residues 86 to 106 traverse the membrane as a helical segment; it reads EWVKFCRQLFGGFSILLWIGA. Residues 107–129 lie on the Extracellular side of the membrane; it reads LLCFLAYGILAAMEDEPSNDNLY. Residues 130–150 form a helical membrane-spanning segment; it reads LGIVLAAVVIVTGCFSYYQEA. Over 151 to 286 the chain is Cytoplasmic; sequence KSSKIMDSFK…VGQTPIAMEI (136 aa). The segment covering 212-227 has biased composition (polar residues); the sequence is DNSSLTGESEPQTRSP. The disordered stretch occupies residues 212-231; sequence DNSSLTGESEPQTRSPEFTH. Residues 287–306 traverse the membrane as a helical segment; that stretch reads EHFIQLITGVAVFLGVSFFV. Over 307–318 the chain is Extracellular; it reads LSLILGYSWLEA. The helical transmembrane segment at 319–336 threads the bilayer; that stretch reads VIFLIGIIVANVPEGLLA. At 337 to 769 the chain is on the cytoplasmic side; it reads TVTVCLTLTA…EEGRLIFDNL (433 aa). Catalysis depends on aspartate 374, which acts as the 4-aspartylphosphate intermediate. Phosphoserine occurs at positions 439, 450, 496, and 559. Threonine 570 is subject to Phosphothreonine. Residues serine 587 and serine 672 each carry the phosphoserine modification. Residues aspartate 714 and aspartate 718 each coordinate Mg(2+). A helical transmembrane segment spans residues 770–789; it reads KKSIAYTLTSNIPEITPFLL. At 790-799 the chain is on the extracellular side; that stretch reads FIIANIPLPL. A helical transmembrane segment spans residues 800–820; the sequence is GTVTILCIDLGTDMVPAISLA. At 821–840 the chain is on the cytoplasmic side; the sequence is YEAAESDIMKRQPRNSQTDK. Serine 826 bears the Phosphoserine mark. Residues 841–863 form a helical membrane-spanning segment; the sequence is LVNERLISMAYGQIGMIQALGGF. At 864-915 the chain is on the extracellular side; that stretch reads FTYFVILAENGFLPSRLLGIRLDWDDRTTNDLEDSYGQEWTYEQRKVVEFTC. The helical transmembrane segment at 916–935 threads the bilayer; that stretch reads HTAFFASIVVVQWADLIICK. The Cytoplasmic portion of the chain corresponds to 936–948; sequence TRRNSVFQQGMKN. Serine 940 is modified (phosphoserine; by PKA). A helical transmembrane segment spans residues 949-967; the sequence is KILIFGLLEETALAAFLSY. The Extracellular segment spans residues 968–982; it reads CPGMGVALRMYPLKV. A helical membrane pass occupies residues 983 to 1003; it reads TWWFCAFPYSLLIFIYDEVRK. The Cytoplasmic portion of the chain corresponds to 1004-1020; the sequence is LILRRYPGGWVEKETYY.

The protein belongs to the cation transport ATPase (P-type) (TC 3.A.3) family. Type IIC subfamily. The sodium/potassium-transporting ATPase is composed of a catalytic alpha subunit, an auxiliary non-catalytic beta subunit and an additional regulatory subunit. Interacts with regulatory subunit FXYD1.

It is found in the membrane. The protein localises to the cell membrane. It catalyses the reaction K(+)(out) + Na(+)(in) + ATP + H2O = K(+)(in) + Na(+)(out) + ADP + phosphate + H(+). Functionally, this is the catalytic component of the active enzyme, which catalyzes the hydrolysis of ATP coupled with the exchange of sodium and potassium ions across the plasma membrane. This action creates the electrochemical gradient of sodium and potassium ions, providing the energy for active transport of various nutrients. The sequence is that of Sodium/potassium-transporting ATPase subunit alpha-2 (Atp1a2) from Mus musculus (Mouse).